The sequence spans 128 residues: Spore germination protein 1/2/3-related protein (128 aa).

An N-terminal signal peptide occupies residues 1 to 26 (MNIRNTLVLLVSTVLVLMSCSIGCYA). Residues asparagine 55 and asparagine 119 are each glycosylated (N-linked (GlcNAc...) asparagine).

This sequence belongs to the Dictyostelium gerABC family.

It is found in the secreted. This is Spore germination protein 1/2/3-related protein from Dictyostelium discoideum (Social amoeba).